The primary structure comprises 458 residues: ATP synthase subunit beta (458 aa).

148-155 (GGAGVGKT) serves as a coordination point for ATP.

It belongs to the ATPase alpha/beta chains family. In terms of assembly, F-type ATPases have 2 components, CF(1) - the catalytic core - and CF(0) - the membrane proton channel. CF(1) has five subunits: alpha(3), beta(3), gamma(1), delta(1), epsilon(1). CF(0) has three main subunits: a(1), b(2) and c(9-12). The alpha and beta chains form an alternating ring which encloses part of the gamma chain. CF(1) is attached to CF(0) by a central stalk formed by the gamma and epsilon chains, while a peripheral stalk is formed by the delta and b chains.

The protein resides in the cell inner membrane. It catalyses the reaction ATP + H2O + 4 H(+)(in) = ADP + phosphate + 5 H(+)(out). Produces ATP from ADP in the presence of a proton gradient across the membrane. The catalytic sites are hosted primarily by the beta subunits. This is ATP synthase subunit beta from Legionella pneumophila (strain Paris).